A 476-amino-acid polypeptide reads, in one-letter code: Exodeoxyribonuclease 7 large subunit (476 aa).

Belongs to the XseA family. As to quaternary structure, heterooligomer composed of large and small subunits.

Its subcellular location is the cytoplasm. The catalysed reaction is Exonucleolytic cleavage in either 5'- to 3'- or 3'- to 5'-direction to yield nucleoside 5'-phosphates.. Bidirectionally degrades single-stranded DNA into large acid-insoluble oligonucleotides, which are then degraded further into small acid-soluble oligonucleotides. The protein is Exodeoxyribonuclease 7 large subunit of Bartonella bacilliformis (strain ATCC 35685 / KC583 / Herrer 020/F12,63).